The primary structure comprises 127 residues: Large ribosomal subunit protein bL12 (127 aa).

Residues 96–127 (GTPSTLKEAVSKDDAEEAAKQLKEAGAEVEVK) are disordered. The span at 104–127 (AVSKDDAEEAAKQLKEAGAEVEVK) shows a compositional bias: basic and acidic residues.

It belongs to the bacterial ribosomal protein bL12 family. In terms of assembly, homodimer. Part of the ribosomal stalk of the 50S ribosomal subunit. Forms a multimeric L10(L12)X complex, where L10 forms an elongated spine to which 2 to 4 L12 dimers bind in a sequential fashion. Binds GTP-bound translation factors.

Functionally, forms part of the ribosomal stalk which helps the ribosome interact with GTP-bound translation factors. Is thus essential for accurate translation. This Oleidesulfovibrio alaskensis (strain ATCC BAA-1058 / DSM 17464 / G20) (Desulfovibrio alaskensis) protein is Large ribosomal subunit protein bL12.